The chain runs to 89 residues: Small ribosomal subunit protein uS15 (89 aa).

The protein belongs to the universal ribosomal protein uS15 family. Part of the 30S ribosomal subunit. Forms a bridge to the 50S subunit in the 70S ribosome, contacting the 23S rRNA.

One of the primary rRNA binding proteins, it binds directly to 16S rRNA where it helps nucleate assembly of the platform of the 30S subunit by binding and bridging several RNA helices of the 16S rRNA. In terms of biological role, forms an intersubunit bridge (bridge B4) with the 23S rRNA of the 50S subunit in the ribosome. This is Small ribosomal subunit protein uS15 from Salinispora tropica (strain ATCC BAA-916 / DSM 44818 / JCM 13857 / NBRC 105044 / CNB-440).